Here is a 192-residue protein sequence, read N- to C-terminus: dTTP/UTP pyrophosphatase (192 aa).

The Proton acceptor role is filled by Asp-72.

This sequence belongs to the Maf family. YhdE subfamily. Requires a divalent metal cation as cofactor.

The protein localises to the cytoplasm. The catalysed reaction is dTTP + H2O = dTMP + diphosphate + H(+). It carries out the reaction UTP + H2O = UMP + diphosphate + H(+). Nucleoside triphosphate pyrophosphatase that hydrolyzes dTTP and UTP. May have a dual role in cell division arrest and in preventing the incorporation of modified nucleotides into cellular nucleic acids. The sequence is that of dTTP/UTP pyrophosphatase from Geobacter metallireducens (strain ATCC 53774 / DSM 7210 / GS-15).